A 1062-amino-acid polypeptide reads, in one-letter code: Carbamoyl phosphate synthase large chain (1062 aa).

Positions 1-401 (MPKRKDIHKI…AMQKAVRSLE (401 aa)) are carboxyphosphate synthetic domain. Residues arginine 129, arginine 169, glycine 175, glycine 176, lysine 208, isoleucine 210, glutamate 215, glycine 241, isoleucine 242, histidine 243, glutamine 284, and glutamate 298 each coordinate ATP. Residues 133–327 (KNLCKELGEP…IAKMAAKIAV (195 aa)) form the ATP-grasp 1 domain. Residues glutamine 284, glutamate 298, and asparagine 300 each contribute to the Mg(2+) site. Residues glutamine 284, glutamate 298, and asparagine 300 each coordinate Mn(2+). Positions 402–546 (IDEKDLYSEE…YSTYDAENES (145 aa)) are oligomerization domain. The segment at 547–929 (HRSGKKSVIV…ALYKAFAGAK (383 aa)) is carbamoyl phosphate synthetic domain. An ATP-grasp 2 domain is found at 671-861 (DDIIKELKLN…MAQVATRVIM (191 aa)). 10 residues coordinate ATP: arginine 707, aspartate 746, leucine 748, glutamate 752, glycine 777, valine 778, histidine 779, serine 780, glutamine 820, and glutamate 832. Residues glutamine 820, glutamate 832, and asparagine 834 each coordinate Mg(2+). Residues glutamine 820, glutamate 832, and asparagine 834 each coordinate Mn(2+). The MGS-like domain occupies 930 to 1062 (MQLPENGNVL…NRSFATDALQ (133 aa)). Positions 930–1062 (MQLPENGNVL…NRSFATDALQ (133 aa)) are allosteric domain.

The protein belongs to the CarB family. In terms of assembly, composed of two chains; the small (or glutamine) chain promotes the hydrolysis of glutamine to ammonia, which is used by the large (or ammonia) chain to synthesize carbamoyl phosphate. Tetramer of heterodimers (alpha,beta)4. It depends on Mg(2+) as a cofactor. Requires Mn(2+) as cofactor.

It carries out the reaction hydrogencarbonate + L-glutamine + 2 ATP + H2O = carbamoyl phosphate + L-glutamate + 2 ADP + phosphate + 2 H(+). The enzyme catalyses hydrogencarbonate + NH4(+) + 2 ATP = carbamoyl phosphate + 2 ADP + phosphate + 2 H(+). Its pathway is amino-acid biosynthesis; L-arginine biosynthesis; carbamoyl phosphate from bicarbonate: step 1/1. It functions in the pathway pyrimidine metabolism; UMP biosynthesis via de novo pathway; (S)-dihydroorotate from bicarbonate: step 1/3. Large subunit of the glutamine-dependent carbamoyl phosphate synthetase (CPSase). CPSase catalyzes the formation of carbamoyl phosphate from the ammonia moiety of glutamine, carbonate, and phosphate donated by ATP, constituting the first step of 2 biosynthetic pathways, one leading to arginine and/or urea and the other to pyrimidine nucleotides. The large subunit (synthetase) binds the substrates ammonia (free or transferred from glutamine from the small subunit), hydrogencarbonate and ATP and carries out an ATP-coupled ligase reaction, activating hydrogencarbonate by forming carboxy phosphate which reacts with ammonia to form carbamoyl phosphate. The protein is Carbamoyl phosphate synthase large chain of Lactobacillus acidophilus (strain ATCC 700396 / NCK56 / N2 / NCFM).